Consider the following 116-residue polypeptide: Nitrogenase-stabilizing/protective protein NifW (116 aa).

It belongs to the NifW family. Homotrimer; associates with NifD.

Its function is as follows. May protect the nitrogenase Fe-Mo protein from oxidative damage. This Rhodopseudomonas palustris (strain TIE-1) protein is Nitrogenase-stabilizing/protective protein NifW.